Here is a 363-residue protein sequence, read N- to C-terminus: Histidine biosynthesis bifunctional protein HisB (363 aa).

A histidinol-phosphatase region spans residues 1–174 (MTQPTLFIDR…AVTNIGDRQP (174 aa)). D9 acts as the Nucleophile in catalysis. D9 and D11 together coordinate Mg(2+). The active-site Proton donor is the D11. Zn(2+) is bound by residues C92, H94, C100, and C102. Mg(2+) is bound at residue D129. The interval 175 to 363 (RYAEVVRKTK…NELPSSKGVL (189 aa)) is imidazoleglycerol-phosphate dehydratase.

The protein in the N-terminal section; belongs to the histidinol-phosphatase family. It in the C-terminal section; belongs to the imidazoleglycerol-phosphate dehydratase family. Mg(2+) serves as cofactor. Requires Zn(2+) as cofactor.

It is found in the cytoplasm. The enzyme catalyses D-erythro-1-(imidazol-4-yl)glycerol 3-phosphate = 3-(imidazol-4-yl)-2-oxopropyl phosphate + H2O. It carries out the reaction L-histidinol phosphate + H2O = L-histidinol + phosphate. The protein operates within amino-acid biosynthesis; L-histidine biosynthesis; L-histidine from 5-phospho-alpha-D-ribose 1-diphosphate: step 6/9. It participates in amino-acid biosynthesis; L-histidine biosynthesis; L-histidine from 5-phospho-alpha-D-ribose 1-diphosphate: step 8/9. This Actinobacillus pleuropneumoniae serotype 5b (strain L20) protein is Histidine biosynthesis bifunctional protein HisB.